We begin with the raw amino-acid sequence, 140 residues long: Large ribosomal subunit protein bL17 (140 aa).

The protein belongs to the bacterial ribosomal protein bL17 family. In terms of assembly, part of the 50S ribosomal subunit. Contacts protein L32.

The chain is Large ribosomal subunit protein bL17 from Rhizobium etli (strain ATCC 51251 / DSM 11541 / JCM 21823 / NBRC 15573 / CFN 42).